The sequence spans 465 residues: GDNF family receptor alpha-2 (465 aa).

A signal peptide spans 1-21 (MILANAFCIVLFVDETLRSLA). 14 cysteine pairs are disulfide-bonded: cysteine 40–cysteine 93, cysteine 47–cysteine 53, cysteine 63–cysteine 78, cysteine 95–cysteine 105, cysteine 159–cysteine 220, cysteine 166–cysteine 172, cysteine 183–cysteine 198, cysteine 193–cysteine 239, cysteine 222–cysteine 227, cysteine 249–cysteine 321, cysteine 256–cysteine 262, cysteine 273–cysteine 291, cysteine 283–cysteine 345, and cysteine 323–cysteine 333. Residues asparagine 355, asparagine 387, and asparagine 412 are each glycosylated (N-linked (GlcNAc...) asparagine). The GPI-anchor amidated serine moiety is linked to residue serine 445. Positions 446–465 (RHRAARILPAVPIVLLKLLL) are cleaved as a propeptide — removed in mature form.

Belongs to the GDNFR family. As to quaternary structure, interacts with NRTN ligand and RET: forms a 2:2:2 ternary complex composed of NRTN ligand, GFRA2 and RET receptor.

It is found in the cell membrane. Receptor for neurturin (NRTN), a growth factor that supports the survival of sympathetic neurons. NRTN-binding leads to autophosphorylation and activation of the RET receptor. The sequence is that of GDNF family receptor alpha-2 (GFRA2) from Gallus gallus (Chicken).